The sequence spans 291 residues: 33 kDa chaperonin (291 aa).

2 disulfides stabilise this stretch: Cys229–Cys231 and Cys262–Cys265.

Belongs to the HSP33 family. Under oxidizing conditions two disulfide bonds are formed involving the reactive cysteines. Under reducing conditions zinc is bound to the reactive cysteines and the protein is inactive.

It is found in the cytoplasm. Its function is as follows. Redox regulated molecular chaperone. Protects both thermally unfolding and oxidatively damaged proteins from irreversible aggregation. Plays an important role in the bacterial defense system toward oxidative stress. This Aliivibrio salmonicida (strain LFI1238) (Vibrio salmonicida (strain LFI1238)) protein is 33 kDa chaperonin.